The following is a 23-amino-acid chain: PNIQTKIIEQIWKEHIFQGTVVK.

It belongs to the aldehyde dehydrogenase family. In terms of assembly, homotetramer.

The enzyme catalyses benzaldehyde + NAD(+) + H2O = benzoate + NADH + 2 H(+). In Acinetobacter guillouiae (Acinetobacter genomosp. 11), this protein is Benzaldehyde dehydrogenase [NAD(+)] I.